The sequence spans 303 residues: 2-dehydropantoate 2-reductase (303 aa).

Residues 7-12 (GCGALG), asparagine 98, and alanine 122 each bind NADP(+). A substrate-binding site is contributed by asparagine 98. Lysine 176 acts as the Proton donor in catalysis. 4 residues coordinate substrate: asparagine 180, asparagine 184, asparagine 194, and serine 244. Glutamate 256 lines the NADP(+) pocket.

Belongs to the ketopantoate reductase family. In terms of assembly, monomer.

It is found in the cytoplasm. The enzyme catalyses (R)-pantoate + NADP(+) = 2-dehydropantoate + NADPH + H(+). It participates in cofactor biosynthesis; (R)-pantothenate biosynthesis; (R)-pantoate from 3-methyl-2-oxobutanoate: step 2/2. In terms of biological role, catalyzes the NADPH-dependent reduction of ketopantoate into pantoic acid. In Shigella flexneri, this protein is 2-dehydropantoate 2-reductase (panE).